A 209-amino-acid polypeptide reads, in one-letter code: Cytidylate kinase (209 aa).

An ATP-binding site is contributed by 9-17 (GPAAAGKGT).

The protein belongs to the cytidylate kinase family. Type 1 subfamily.

It is found in the cytoplasm. It catalyses the reaction CMP + ATP = CDP + ADP. The enzyme catalyses dCMP + ATP = dCDP + ADP. The polypeptide is Cytidylate kinase (Granulibacter bethesdensis (strain ATCC BAA-1260 / CGDNIH1)).